The chain runs to 175 residues: Transcription factor E (175 aa).

Residues 4–88 (AEDLFINLAK…YWKPNIDQIN (85 aa)) enclose the HTH TFE/IIEalpha-type domain.

The protein belongs to the TFE family. In terms of assembly, monomer. Interaction with RNA polymerase subunits RpoF and RpoE is necessary for Tfe stimulatory transcription activity. Able to interact with Tbp and RNA polymerase in the absence of DNA promoter. Interacts both with the preinitiation and elongation complexes.

Transcription factor that plays a role in the activation of archaeal genes transcribed by RNA polymerase. Facilitates transcription initiation by enhancing TATA-box recognition by TATA-box-binding protein (Tbp), and transcription factor B (Tfb) and RNA polymerase recruitment. Not absolutely required for transcription in vitro, but particularly important in cases where Tbp or Tfb function is not optimal. It dynamically alters the nucleic acid-binding properties of RNA polymerases by stabilizing the initiation complex and destabilizing elongation complexes. Seems to translocate with the RNA polymerase following initiation and acts by binding to the non template strand of the transcription bubble in elongation complexes. The sequence is that of Transcription factor E from Saccharolobus islandicus (strain Y.N.15.51 / Yellowstone #2) (Sulfolobus islandicus).